The chain runs to 345 residues: MLALRKTLLHGRLPAAPPAAAAAAIASRIPALLRRLSSSPGDGQGGDEWGSSWSTGITKEHFDGSDAAVGRPVTSPSKPVSPELAAVRAMDEEDEIFRAMERDNREAKAYVDSWGDRMRETCELLKQVREPGSRGSYLKDSEKQEMYRLHKEDPETYTVERLAKDFRVMRQRVHAILWLKEMEEEEERKLGKPLDDSVEVLLDSCPEFFNSHDREFHVASLPYKPDFKVMPEGWDGTTRDPDEVLYEISMKEDQMLYEEFVQRLQFNKKKVAGEVKCHKYSRRRPDDGWTYMVEKLGAQSKRGSGGGWKFASLPDGSSRPLNDMEKMYVKRETPKRRRRIMAPFK.

Residues Met1–Gly43 constitute a mitochondrion transit peptide. A disordered region spans residues Leu36–Ser81.

Expressed in roots, stems, leaves and florets.

Its subcellular location is the mitochondrion. Functionally, essential for fertility (male and female gametophyte functions and development). Required for the integrity of female gametic mitochondria. Involved in embryo apical-basal patterning, and particularly dorsal-ventral patterning, during early embryogenesis, and endosperm free nucleus positioning and development as well as early endosperm development, probably by modulating the expression pattern of related genes (e.g. AL1, MYB3/AL2, CYP78A13/GE, PNH1, HAZ1, MPK6 and OSH1). Has function in triggering of endosperm programmed cell death (PCD) leading to syncytial endosperm cellularization and starchy endosperm cell maturation. Implicated in central vacuole dynamics necessary for microspore development leading to pollen production, and for pollen development and germination. The polypeptide is Protein GAMETE CELL DEFECTIVE 1, mitochondrial (Oryza sativa subsp. japonica (Rice)).